The sequence spans 450 residues: Phospho-2-dehydro-3-deoxyheptonate aldolase (450 aa).

Positions 1-13 are enriched in polar residues; it reads MTVNAKTSPSAGN. The interval 1–20 is disordered; that stretch reads MTVNAKTSPSAGNTWRDLPA.

This sequence belongs to the class-II DAHP synthase family. As to quaternary structure, homodimer.

The enzyme catalyses D-erythrose 4-phosphate + phosphoenolpyruvate + H2O = 7-phospho-2-dehydro-3-deoxy-D-arabino-heptonate + phosphate. Its pathway is metabolic intermediate biosynthesis; chorismate biosynthesis; chorismate from D-erythrose 4-phosphate and phosphoenolpyruvate: step 1/7. This Streptomyces coelicolor (strain ATCC BAA-471 / A3(2) / M145) protein is Phospho-2-dehydro-3-deoxyheptonate aldolase (aroH).